The sequence spans 124 residues: Small ribosomal subunit protein uS12 (124 aa).

Position 89 is a 3-methylthioaspartic acid (Asp89).

Belongs to the universal ribosomal protein uS12 family. As to quaternary structure, part of the 30S ribosomal subunit. Contacts proteins S8 and S17. May interact with IF1 in the 30S initiation complex.

Its function is as follows. With S4 and S5 plays an important role in translational accuracy. In terms of biological role, interacts with and stabilizes bases of the 16S rRNA that are involved in tRNA selection in the A site and with the mRNA backbone. Located at the interface of the 30S and 50S subunits, it traverses the body of the 30S subunit contacting proteins on the other side and probably holding the rRNA structure together. The combined cluster of proteins S8, S12 and S17 appears to hold together the shoulder and platform of the 30S subunit. This chain is Small ribosomal subunit protein uS12, found in Shewanella halifaxensis (strain HAW-EB4).